The chain runs to 63 residues: MRGTSFILFAVVVILGFLNANAEPLANPAPLANPDPLANPDPLANPEAFDLLGLVKKVASALG.

An N-terminal signal peptide occupies residues 1–22 (MRGTSFILFAVVVILGFLNANA). AXPX repeat units follow at residues 22–25 (AEPL), 26–29 (ANPA), 32–35 (ANPD), 38–41 (ANPD), and 44–47 (ANPE). Residues 23–48 (EPLANPAPLANPDPLANPDPLANPEA) constitute a propeptide that is removed on maturation. A Leucine amide modification is found at L62.

In terms of tissue distribution, expressed by the venom gland.

It is found in the secreted. The protein resides in the target cell membrane. Antimicrobial peptide. Shows activities against Gram-positive bacteria (S.aureus MIC=50 uM and 200 ug/ml, and B.subtilis MIC=200 ug/ml), Gram-negative bacterium E.coli (MIC=100 uM and 200 ug/ml) and fungi (B.cinerea MIC=5 uM, S.cerevisiae MIC=128 ug/ml, S.pombe MIC=128 ug/ml, A.nidulans MIC=128 ug/ml, and C.albicans MIC=64-100 uM). Shows cytolytic activity against insect cell lines. Its hemolytic activity is controversial, as Baek and colleagues report no activity while Bea and colleagues note a hemolytic activity. In vivo, peptide injection in the vicinity of the head and thorax of lepidopteran larvae induces feeding disorder followed by death due to starvation. Is weakly lethal when tested on water flies (D.magna), but is not lethal on lady beetles (H.convergens). This Eumenes pomiformis (Potter wasp) protein is Venom peptide 2a.